The chain runs to 435 residues: 5'-deoxyadenosine deaminase (435 aa).

Zn(2+) contacts are provided by H64 and H66. Substrate contacts are provided by E93 and H185. H212 contacts Zn(2+). The substrate site is built by E215 and D300. A Zn(2+)-binding site is contributed by D300.

The protein belongs to the metallo-dependent hydrolases superfamily. MTA/SAH deaminase family. In terms of assembly, homotetramer. Zn(2+) serves as cofactor.

The enzyme catalyses 5'-deoxyadenosine + H2O + H(+) = 5'-deoxyinosine + NH4(+). It carries out the reaction S-adenosyl-L-homocysteine + H2O + H(+) = S-inosyl-L-homocysteine + NH4(+). The catalysed reaction is S-methyl-5'-thioadenosine + H2O + H(+) = S-methyl-5'-thioinosine + NH4(+). It catalyses the reaction adenosine + H2O + H(+) = inosine + NH4(+). It functions in the pathway amino-acid biosynthesis; S-adenosyl-L-methionine biosynthesis. Functionally, catalyzes the deamination of three SAM-derived enzymatic products, namely 5'-deoxyadenosine, S-adenosyl-L-homocysteine, and 5'-methylthioadenosine, to produce the inosine analogs. Can also deaminate adenosine. The preferred substrate for this enzyme is 5'-deoxyadenosine, but all these substrates are efficiently deaminated. Likely functions in a S-adenosyl-L-methionine (SAM) recycling pathway from S-adenosyl-L-homocysteine (SAH) produced from SAM-dependent methylation reactions. May also be involved in the recycling of 5'-deoxyadenosine, whereupon the 5'-deoxyribose moiety of 5'-deoxyinosine is further metabolized to deoxyhexoses used for the biosynthesis of aromatic amino acids in methanogens. The chain is 5'-deoxyadenosine deaminase from Methanobrevibacter smithii (strain ATCC 35061 / DSM 861 / OCM 144 / PS).